The following is a 405-amino-acid chain: Insertion element IS110 uncharacterized 43.6 kDa protein (405 aa).

The protein is Insertion element IS110 uncharacterized 43.6 kDa protein of Streptomyces coelicolor (strain ATCC BAA-471 / A3(2) / M145).